Consider the following 282-residue polypeptide: Bifunctional protein FolD (282 aa).

Residues 160–162 (NRS), Ser185, and Ile228 contribute to the NADP(+) site.

It belongs to the tetrahydrofolate dehydrogenase/cyclohydrolase family. In terms of assembly, homodimer.

The catalysed reaction is (6R)-5,10-methylene-5,6,7,8-tetrahydrofolate + NADP(+) = (6R)-5,10-methenyltetrahydrofolate + NADPH. The enzyme catalyses (6R)-5,10-methenyltetrahydrofolate + H2O = (6R)-10-formyltetrahydrofolate + H(+). It participates in one-carbon metabolism; tetrahydrofolate interconversion. Catalyzes the oxidation of 5,10-methylenetetrahydrofolate to 5,10-methenyltetrahydrofolate and then the hydrolysis of 5,10-methenyltetrahydrofolate to 10-formyltetrahydrofolate. The polypeptide is Bifunctional protein FolD (Cenarchaeum symbiosum (strain A)).